A 268-amino-acid chain; its full sequence is Type III pantothenate kinase (268 aa).

6–13 (DVGNTNIV) serves as a coordination point for ATP. Substrate-binding positions include Tyr-100 and 107 to 110 (GADR). Catalysis depends on Asp-109, which acts as the Proton acceptor. K(+) is bound at residue Asp-129. Thr-132 serves as a coordination point for ATP. Thr-184 is a substrate binding site.

It belongs to the type III pantothenate kinase family. As to quaternary structure, homodimer. Requires NH4(+) as cofactor. It depends on K(+) as a cofactor.

It localises to the cytoplasm. The catalysed reaction is (R)-pantothenate + ATP = (R)-4'-phosphopantothenate + ADP + H(+). The protein operates within cofactor biosynthesis; coenzyme A biosynthesis; CoA from (R)-pantothenate: step 1/5. Its function is as follows. Catalyzes the phosphorylation of pantothenate (Pan), the first step in CoA biosynthesis. In Alkaliphilus metalliredigens (strain QYMF), this protein is Type III pantothenate kinase.